The following is a 251-amino-acid chain: Hydroxyacylglutathione hydrolase (251 aa).

Zn(2+) contacts are provided by histidine 53, histidine 55, aspartate 57, histidine 58, histidine 110, aspartate 127, and histidine 165.

This sequence belongs to the metallo-beta-lactamase superfamily. Glyoxalase II family. As to quaternary structure, monomer. Zn(2+) is required as a cofactor.

The enzyme catalyses an S-(2-hydroxyacyl)glutathione + H2O = a 2-hydroxy carboxylate + glutathione + H(+). Its pathway is secondary metabolite metabolism; methylglyoxal degradation; (R)-lactate from methylglyoxal: step 2/2. Thiolesterase that catalyzes the hydrolysis of S-D-lactoyl-glutathione to form glutathione and D-lactic acid. This chain is Hydroxyacylglutathione hydrolase, found in Escherichia coli O6:K15:H31 (strain 536 / UPEC).